A 393-amino-acid chain; its full sequence is Ceramide synthase 4 (393 aa).

Topologically, residues 1-31 (MWSSLNDWLWNERLWLPANISWAQLEDHDGL) are lumenal. An N-linked (GlcNAc...) asparagine glycan is attached at Asn19. Residues 32–52 (VFPHPQDTLMAVPLALALVVV) form a helical membrane-spanning segment. The tract at residues 67-128 (WLGVRNQIRR…RRRRNQDRPC (62 aa)) is homeobox-like. The region spanning 131–332 (KKFCESSWKF…ILCMIYSFIK (202 aa)) is the TLC domain. Transmembrane regions (helical) follow at residues 140–160 (FVFY…ESWL), 179–199 (LYHW…TLPF), 209–229 (QVIH…LNLL), and 260–280 (MCDT…LVLF). The Last loop motif motif lies at 291–301 (ESIGNFSPFFG). The chain crosses the membrane as a helical span at residues 304-324 (FLNILLVILQLLHVFWSWLIL). Residues 325–393 (CMIYSFIKKG…RMVNRHTPAT (69 aa)) are Cytoplasmic-facing. Residues Ser342, Ser349, and Ser350 each carry the phosphoserine modification. A compositionally biased stretch (acidic residues) spans 346 to 356 (ELDSSDGEAAE). Residues 346 to 393 (ELDSSDGEAAEECPQMKNGAAQRPGAAPTDGPRSRAAGRMVNRHTPAT) form a disordered region.

Phosphorylated at the C-terminus by CK2.

The protein localises to the endoplasmic reticulum membrane. The catalysed reaction is sphinganine + octadecanoyl-CoA = N-(octadecanoyl)-sphinganine + CoA + H(+). It carries out the reaction eicosanoyl-CoA + sphinganine = N-eicosanoylsphinganine + CoA + H(+). The enzyme catalyses docosanoyl-CoA + sphinganine = N-docosanoylsphinganine + CoA + H(+). It catalyses the reaction tetracosanoyl-CoA + sphinganine = N-tetracosanoylsphinganine + CoA + H(+). The catalysed reaction is hexacosanoyl-CoA + sphinganine = N-hexacosanoylsphinganine + CoA + H(+). It carries out the reaction a fatty acyl-CoA + sphing-4-enine = an N-acylsphing-4-enine + CoA + H(+). The enzyme catalyses sphing-4-enine + octadecanoyl-CoA = N-octadecanoylsphing-4-enine + CoA + H(+). It catalyses the reaction hexadecasphinganine + octadecanoyl-CoA = N-octadecanoylhexadecasphinganine + CoA + H(+). The protein operates within lipid metabolism; sphingolipid metabolism. In terms of biological role, ceramide synthase that catalyzes formation of ceramide from sphinganine and acyl-CoA substrates, with high selectivity toward long and very-long chains (C18:0-C22:0) as acyl donor. In Bos taurus (Bovine), this protein is Ceramide synthase 4.